We begin with the raw amino-acid sequence, 122 residues long: Proteasome assembly chaperone 3 (122 aa).

M1 carries the N-acetylmethionine modification.

The protein belongs to the PSMG3 family. Homodimer. Interacts directly with alpha and beta subunits of the 20S proteasome but dissociates before the formation of half-proteasomes, probably upon recruitment of POMP. Interacts with PSMG4.

In terms of biological role, chaperone protein which promotes assembly of the 20S proteasome. May cooperate with PSMG1-PSMG2 heterodimers to orchestrate the correct assembly of proteasomes. This chain is Proteasome assembly chaperone 3 (Psmg3), found in Mus musculus (Mouse).